An 873-amino-acid chain; its full sequence is Leucine--tRNA ligase (873 aa).

The short motif at proline 42–histidine 52 is the 'HIGH' region element. Residues proline 624–proline 643 form a disordered region. The 'KMSKS' region motif lies at lysine 632 to serine 636. Lysine 635 provides a ligand contact to ATP.

This sequence belongs to the class-I aminoacyl-tRNA synthetase family.

It localises to the cytoplasm. The catalysed reaction is tRNA(Leu) + L-leucine + ATP = L-leucyl-tRNA(Leu) + AMP + diphosphate. The chain is Leucine--tRNA ligase from Pseudomonas aeruginosa (strain LESB58).